The sequence spans 49 residues: Chitin-binding lectin (49 aa).

Residues 2–45 (DHRCGREATPPGKLCNDGRCCSQWGWCGTTQAYCSGKCQSQCDC) enclose the Chitin-binding type-1 domain. 4 cysteine pairs are disulfide-bonded: Cys5-Cys22, Cys16-Cys28, Cys21-Cys35, and Cys39-Cys43.

As to quaternary structure, homodimer; disulfide-linked.

Chitin-binding lectin which is specific for N-acetylglucosamine oligomers. This is Chitin-binding lectin from Viscum album (European mistletoe).